A 162-amino-acid polypeptide reads, in one-letter code: MLKITLIAACAENLCIGAGNAMPWHIPEDFAFFKAYTLGKPVIMGRKTWESLPVKPLPGRRNIVISRQADYCAAGAETAASLEAALALCAGAEEAVIMGGAQIYGQAMPLATDLRITEVDLSVEGDAFFPAIDRTHWKEAERTERRVSSKGTSYAFVHYLRY.

Positions 3–161 constitute a DHFR domain; it reads KITLIAACAE…TSYAFVHYLR (159 aa). 7–9 contributes to the substrate binding site; the sequence is IAA. Residues 8 to 9 and 16 to 21 contribute to the NADP(+) site; these read AA and IGAGNA. Asp-29 is a substrate binding site. Residue 45 to 48 coordinates NADP(+); sequence GRKT. Position 60 (Arg-60) interacts with substrate. Residues 65 to 68 and 98 to 103 contribute to the NADP(+) site; these read ISRQ and MGGAQI. Substrate is bound at residue Thr-117.

It belongs to the dihydrofolate reductase family.

The catalysed reaction is (6S)-5,6,7,8-tetrahydrofolate + NADP(+) = 7,8-dihydrofolate + NADPH + H(+). It functions in the pathway cofactor biosynthesis; tetrahydrofolate biosynthesis; 5,6,7,8-tetrahydrofolate from 7,8-dihydrofolate: step 1/1. Its function is as follows. Key enzyme in folate metabolism. Catalyzes an essential reaction for de novo glycine and purine synthesis, and for DNA precursor synthesis. This chain is Dihydrofolate reductase (folA), found in Neisseria meningitidis serogroup A / serotype 4A (strain DSM 15465 / Z2491).